The following is a 320-amino-acid chain: Cytochrome f (320 aa).

A signal peptide spans 1–35; sequence MQTRNTFSSIKEEITRSISVSLMIYIITWAPVSNA. Residues Tyr36, Cys56, Cys59, and His60 each contribute to the heme site. A helical membrane pass occupies residues 286-306; that stretch reads VQGLLFFFASVILAQIFLVLK.

This sequence belongs to the cytochrome f family. The 4 large subunits of the cytochrome b6-f complex are cytochrome b6, subunit IV (17 kDa polypeptide, petD), cytochrome f and the Rieske protein, while the 4 small subunits are PetG, PetL, PetM and PetN. The complex functions as a dimer. Heme serves as cofactor.

It is found in the plastid. The protein resides in the chloroplast thylakoid membrane. In terms of biological role, component of the cytochrome b6-f complex, which mediates electron transfer between photosystem II (PSII) and photosystem I (PSI), cyclic electron flow around PSI, and state transitions. The chain is Cytochrome f from Cucumis sativus (Cucumber).